A 226-amino-acid polypeptide reads, in one-letter code: ATP synthase F(0) complex subunit a (226 aa).

6 helical membrane passes run 10–30 (ITPT…PPVI), 68–88 (WSLM…LGLL), 97–117 (QLSM…ILGF), 138–158 (IPML…ALAV), 164–184 (ITAG…LTSI), and 189–209 (AMIT…VALI).

The protein belongs to the ATPase A chain family. Component of the ATP synthase complex composed at least of ATP5F1A/subunit alpha, ATP5F1B/subunit beta, ATP5MC1/subunit c (homooctomer), MT-ATP6/subunit a, MT-ATP8/subunit 8, ATP5ME/subunit e, ATP5MF/subunit f, ATP5MG/subunit g, ATP5MK/subunit k, ATP5MJ/subunit j, ATP5F1C/subunit gamma, ATP5F1D/subunit delta, ATP5F1E/subunit epsilon, ATP5PF/subunit F6, ATP5PB/subunit b, ATP5PD/subunit d, ATP5PO/subunit OSCP. ATP synthase complex consists of a soluble F(1) head domain (subunits alpha(3) and beta(3)) - the catalytic core - and a membrane F(0) domain - the membrane proton channel (subunits c, a, 8, e, f, g, k and j). These two domains are linked by a central stalk (subunits gamma, delta, and epsilon) rotating inside the F1 region and a stationary peripheral stalk (subunits F6, b, d, and OSCP). Interacts with DNAJC30; interaction is direct.

It localises to the mitochondrion inner membrane. The catalysed reaction is H(+)(in) = H(+)(out). In terms of biological role, subunit a, of the mitochondrial membrane ATP synthase complex (F(1)F(0) ATP synthase or Complex V) that produces ATP from ADP in the presence of a proton gradient across the membrane which is generated by electron transport complexes of the respiratory chain. ATP synthase complex consist of a soluble F(1) head domain - the catalytic core - and a membrane F(1) domain - the membrane proton channel. These two domains are linked by a central stalk rotating inside the F(1) region and a stationary peripheral stalk. During catalysis, ATP synthesis in the catalytic domain of F(1) is coupled via a rotary mechanism of the central stalk subunits to proton translocation. With the subunit c (ATP5MC1), forms the proton-conducting channel in the F(0) domain, that contains two crucial half-channels (inlet and outlet) that facilitate proton movement from the mitochondrial intermembrane space (IMS) into the matrix. Protons are taken up via the inlet half-channel and released through the outlet half-channel, following a Grotthuss mechanism. This is ATP synthase F(0) complex subunit a from Cricetulus griseus (Chinese hamster).